We begin with the raw amino-acid sequence, 321 residues long: MGSLEVPCIDLSENDTSIVVKELLDACKNWGFVSLKNHGIPLDEIDRTFKLADKFFDIPVEEKQKYLFKGGRLHSGYTGHFGEKLDMEHQSRGDLKESYDLAGFPDPKLENLCPFIAEHMDEFLQFQRHCYKLTLRLLDFFAIGFGIPPDFFSKSHSSEEDVLRLLKYSIPEGVERREDDEDAGAHSDYGSITLLFQRDAAGLEIRPPNFVKDMDWIKVNVQPDVVLVNIADMLQFWTSGKLRSTVHRVRIDPGVKTRQTIAYFVTPDPETPLSPLFEEKTGKDIETVTAGEWIDGRINFTYGYSAPPKGYLGSQNDGIVA.

The Fe2OG dioxygenase domain occupies 159-267; that stretch reads EEDVLRLLKY…RQTIAYFVTP (109 aa).

It belongs to the UPF0676 family.

Its subcellular location is the cytoplasm. It is found in the nucleus. This chain is UPF0676 protein C1494.01, found in Schizosaccharomyces pombe (strain 972 / ATCC 24843) (Fission yeast).